The primary structure comprises 551 residues: Protein ROOT HAIR SPECIFIC 17 (551 aa).

A helical; Signal-anchor for type II membrane protein membrane pass occupies residues 39–59; it reads LFPLVSAVSGCLLLILFSFST. N109 and N153 each carry an N-linked (GlcNAc...) asparagine glycan. 293–295 serves as a coordination point for substrate; the sequence is HLR. N405 and N465 each carry an N-linked (GlcNAc...) asparagine glycan. The disordered stretch occupies residues 515–539; that stretch reads KAKHVNEDDSSEYSEIGNVPISSRS.

This sequence belongs to the glycosyltransferase GT106 family. In terms of tissue distribution, specifically expressed in the root hair.

The protein localises to the membrane. Its pathway is glycan metabolism. The chain is Protein ROOT HAIR SPECIFIC 17 from Arabidopsis thaliana (Mouse-ear cress).